A 443-amino-acid polypeptide reads, in one-letter code: Nuclear distribution protein nudF (443 aa).

Residues 9–41 (QAEELHKSIIAYLSSINASRSCEVLREELQVDS) enclose the LisH domain. Residues 60 to 87 (TGIARLQKKILDLESKLAGLQTELDTIS) are a coiled coil. 8 WD repeats span residues 111-152 (SHRD…RTLK), 154-194 (HMRP…ANVR), 198-238 (GHDH…CVKV), 241-280 (SQGSWINDVSPSFDGKWLVTGGRDQAAMVWEVASAKSVAS), 283-343 (GHEN…IKTL), 345-384 (GHDNWVRGLLFHPGGKYLISVADDKTIRCWDLSQGGRLVK), 388-427 (AHGHFVSCIRWGPVPVSDVPVETSESTKSSKSDSVKPGFQ), and 429-443 (VIATGSADSSVRIFT).

Belongs to the WD repeat LIS1/nudF family. In terms of assembly, self-associates. Interacts with nudE and dynein.

It is found in the cytoplasm. The protein localises to the cytoskeleton. Its subcellular location is the spindle pole. In terms of biological role, positively regulates the activity of the minus-end directed microtubule motor protein dynein. May enhance dynein-mediated microtubule sliding by targeting dynein to the microtubule plus end. Required for nuclear migration during vegetative growth as well as development. Required for retrograde early endosome (EE) transport from the hyphal tip. Required for localization of dynein to the mitotic spindle poles. Recruits additional proteins to the dynein complex at SPBs. This chain is Nuclear distribution protein nudF, found in Aspergillus niger (strain ATCC MYA-4892 / CBS 513.88 / FGSC A1513).